The primary structure comprises 461 residues: Alcaligin biosynthesis enzyme (461 aa).

9–15 lines the FAD pocket; it reads VAIGIGP.

Belongs to the lysine N(6)-hydroxylase/L-ornithine N(5)-oxygenase family. Requires FAD as cofactor.

Its pathway is siderophore biosynthesis; alcaligin biosynthesis. The sequence is that of Alcaligin biosynthesis enzyme (alcA) from Bordetella bronchiseptica (strain ATCC BAA-588 / NCTC 13252 / RB50) (Alcaligenes bronchisepticus).